The following is a 555-amino-acid chain: Cytochrome P450 monooxygeanse terQ (555 aa).

The chain crosses the membrane as a helical span at residues 10-30 (VPAHAWPTITVAGAVMVVVLL). C479 provides a ligand contact to heme. Residues 535–555 (DAGNTARVDPGAPDGVASEPS) are disordered.

It belongs to the cytochrome P450 family. The cofactor is heme.

Its subcellular location is the membrane. Its pathway is secondary metabolite biosynthesis. In terms of biological role, cytochrome P450 monooxygeanse; part of the gene cluster that mediates the biosynthesis of terpendoles, indole-diterpene (IDT) mycotoxins including terpendole I, terpendole K, terpendole C, as well as the kinesin Eg5 inhibitor terpendole E. TerQ is a C11-hydroxylating enzyme that converts paspalline into terpendole E. Is also able to hydroxylate 13-desoxyterpendole I at C-13 to produce terpendole I. Terpendoles biosynthesis begins with the synthesis of geranylgeranyl diphosphate (GGPP) by a yet unidentified GGPP synthase. Condensation of indole-3-glycerol phosphate with GGPP by the prenyltransferase terC then forms 3-geranylgeranylindole (3-GGI), followed by epoxidation and cyclization of this intermediate (by the FAD-dependent monooxygeanse terM and the terpene cyclase terB) to form paspaline. The cytochrome monooxygenase terQ then hydroxylates paspalline at C-11 to yield terpendole E. The cytochrome monooxygenase terP converts terpendole E to 13-desoxyterpendole I, and terQ converts 13-desoxyterpendole I into terpendole I. TerF and terK are required for conversion of terpendole I to terpendole C which is further converted to terpendole K. This is Cytochrome P450 monooxygeanse terQ from Tolypocladium album (Soil fungus).